We begin with the raw amino-acid sequence, 34 residues long: Photosystem II reaction center protein M (34 aa).

A helical membrane pass occupies residues 5–25 (ILAFIATALFILVPTAFLLII).

The protein belongs to the PsbM family. As to quaternary structure, PSII is composed of 1 copy each of membrane proteins PsbA, PsbB, PsbC, PsbD, PsbE, PsbF, PsbH, PsbI, PsbJ, PsbK, PsbL, PsbM, PsbT, PsbX, PsbY, PsbZ, Psb30/Ycf12, at least 3 peripheral proteins of the oxygen-evolving complex and a large number of cofactors. It forms dimeric complexes.

It is found in the plastid. It localises to the chloroplast thylakoid membrane. Its function is as follows. One of the components of the core complex of photosystem II (PSII). PSII is a light-driven water:plastoquinone oxidoreductase that uses light energy to abstract electrons from H(2)O, generating O(2) and a proton gradient subsequently used for ATP formation. It consists of a core antenna complex that captures photons, and an electron transfer chain that converts photonic excitation into a charge separation. This subunit is found at the monomer-monomer interface. The polypeptide is Photosystem II reaction center protein M (Calycanthus floridus var. glaucus (Eastern sweetshrub)).